Reading from the N-terminus, the 242-residue chain is uncharacterized protein (242 aa).

The next 2 helical transmembrane spans lie at 4–24 (NYQV…YYVV) and 34–54 (LLFG…WLFG). Asparagine 73 is a glycosylation site (N-linked (GlcNAc...) asparagine; by host). 3 helical membrane passes run 74-94 (YTIV…VIGY), 106-126 (VLTV…YGGF), and 162-182 (LDVF…FVMY). Asparagine 185 carries an N-linked (GlcNAc...) asparagine; by host glycan. The next 2 helical transmembrane spans lie at 189–209 (VIGL…APTL) and 217–237 (CLLS…STGI).

Its subcellular location is the membrane. This is an uncharacterized protein from Acanthamoeba polyphaga mimivirus (APMV).